A 566-amino-acid polypeptide reads, in one-letter code: Malate synthase, glyoxysomal (566 aa).

Arginine 179 acts as the Proton acceptor in catalysis. Aspartate 465 (proton donor) is an active-site residue. A Microbody targeting signal motif is present at residues 564–566 (SRL).

The protein belongs to the malate synthase family.

The protein localises to the glyoxysome. It carries out the reaction glyoxylate + acetyl-CoA + H2O = (S)-malate + CoA + H(+). The protein operates within carbohydrate metabolism; glyoxylate cycle; (S)-malate from isocitrate: step 2/2. This chain is Malate synthase, glyoxysomal (MLS), found in Raphanus sativus (Radish).